The chain runs to 1457 residues: MAGIIKKQILKHLSRFTKNLSPDKINLSTLKGEGELKNLELDEEVLQNMLDLPTWLAISKVFCNKASIRIPWTKLKTQPICLSLDKVIMEMSTCEEPRAPNGPSPIATASGQSEYGFAEKVVEGITVSVNSIVIRIGAKAFNASFELSQLRIYSVNAQWEHGDLRFTRIQDPQRGEVLTFKEINWQMIRIEADATQSSHLEIMCAPVRLITNQSKIRVTLKRRLKDCNVIATKLVLILDDLLWVLTDSQLKAMVQYAKSLSEAIEKSTEQRKSMAPEPTQSSTVTSSAQHVKTPQAANAPDLSDAIVKLFNDFDVKETSHHLVISHLDLHICDDIHAKEKESNRRVSGGAMQLSFTQLTIDYYPYHKAGDSCSHWMYFSDATKTKNGWANELLHEFECNVEMLKQAMKDRNLGSPPKSPTHASPQHTQTEKDSTLKGTPKTPSVLPQPSKAKLMSSSVVVRLADFNIYQVSTAEQCRSSPKSMISCNKKSLYLPQEMSAIYIEFTEYYYPDGKDFPIPSPNLYSQLNALQFTVDERSILWLNQFLLDLKQSLNQFMAVYKLNDSSKSDEHVDIRVDGLMLKFVIPSEVKAGCHQDQPHTVSIQSSEMIATNTRHCPNCRHSDLEALCQDFKECDFFSKTYTRFPKSCDSFNLLHPIFQRHAHEQDTKMHEVYKGNIIPKLNKNTLKTSAATDVWAVYFSQFWIDYEGMKSGKGRPVSFVDAFPLSIWICQPTRYAELQKEFQTCDQVTLNTSQSESSDLAGRMKRKKLLKEYYSTESEPLTNGGQRPSSDTFLRFSSSSSDADVHVLVRVHKHVSMQINHYQYLLLLFIHESLVLLSDTLRRDVEAVIGSPASQTSVCVGILLRSAELALLLHPVNPTSALRSPASESGSPLLPDFLPAENGGFLSSKRKQGGSGIHRIRNATLNHMSDNRSMSVDLSHAPLKDPLLFKSASDTNLQKGTSFLDYLSDKHLGKISEDESSGLSHKSGSGEMTSEGSHTKDVASTDSDSVLNYRDGSTRLSLDDDGNHNPPSNPVTGKGIDAIHSIFRAEDFLPEAASLSENPESSKEEAPPARAPKSQTSLSAKSKERCPPSPAPLSVSYKNMKRSASQVSLDTLSLDSMVLEEQAESDGSDSHVLLGKAMKRNSNTSCQSPAESVNTSANTQTCGEASPEAVSTNSEGTQENRDDLMSVVVFRITGVNGEIDIRGEDTEVCLQVNQVTPSQLGNVSLRHYLGNRPVGSDQKAIIHPKSSPEISLRFESGPGAVVHSLLAEKNGFLQCHIENFTTEFLTSSLLNIQHFLEDETVATVMPMKIQVSNTKINLKDDSPRGSTVSLQPSPVTVHIDRLVVERSDDGSFHIRDSHLFNTGTDFKDGASSDSVVRTRGMCDVRMHSSVTQATQTSPEVPLPSQSANFLDITREQLMEENECLRQRLAQAKMELAEAHSARDELLHQMKRMGL.

One can recognise a Chorein N-terminal domain in the interval 3-94 (GIIKKQILKH…DKVIMEMSTC (92 aa)). Disordered regions lie at residues 267 to 295 (STEQRKSMAPEPTQSSTVTSSAQHVKTPQ) and 409 to 449 (DRNL…PQPS). Residues 278–295 (PTQSSTVTSSAQHVKTPQ) show a composition bias toward polar residues. 4 positions are modified to phosphoserine: S414, S418, S774, and S934. Disordered stretches follow at residues 975 to 1038 (SEDE…TGKG), 1056 to 1099 (ASLS…LSVS), and 1145 to 1183 (SNTSCQSPAESVNTSANTQTCGEASPEAVSTNSEGTQEN). Polar residues predominate over residues 980-995 (SGLSHKSGSGEMTSEG). A Phosphoserine modification is found at S1008. Positions 1145-1180 (SNTSCQSPAESVNTSANTQTCGEASPEAVSTNSEGT) are enriched in polar residues. A coiled-coil region spans residues 1410 to 1455 (ANFLDITREQLMEENECLRQRLAQAKMELAEAHSARDELLHQMKRM).

In terms of assembly, homodimer (via N-terminus). Associates with the Golgi-associated retrograde protein (GARP) complex. Interacts with GARP complex component VPS52. Interacts (via C-terminal coiled-coil domain) with STX6.

The protein localises to the cytoplasm. Its subcellular location is the cytosol. It is found in the early endosome. Its function is as follows. Tube-forming lipid transport protein which mediates the transfer of lipids between membranes at organelle contact sites. Required for retrograde traffic of vesicle clusters in the early endocytic pathway to the Golgi complex. This Mus musculus (Mouse) protein is Bridge-like lipid transfer protein family member 3B (Bltp3b).